A 282-amino-acid polypeptide reads, in one-letter code: 5'-adenylylsulfate reductase-like 2 (282 aa).

The N-terminal stretch at 1–19 (MRWWPALPLLLLAVAVAGA) is a signal peptide. The 140-residue stretch at 20–159 (GDAAPVCTRP…LAAFYNDVSG (140 aa)) folds into the Thioredoxin domain. An N-linked (GlcNAc...) asparagine glycan is attached at Asn134. The chain crosses the membrane as a helical span at residues 205–225 (AASFVILRLLYLFYPKITAFV).

Its subcellular location is the membrane. The protein is 5'-adenylylsulfate reductase-like 2 (APRL2) of Oryza sativa subsp. japonica (Rice).